A 76-amino-acid polypeptide reads, in one-letter code: MMKLSVSFLLLLMLLPFITGEENSDSDVLKSGAAVRQGRGRCRGFREDCSQHRDCCGDLCCNGNTCVITVIACPKW.

Residues 1–20 (MMKLSVSFLLLLMLLPFITG) form the signal peptide. Residues 21-39 (EENSDSDVLKSGAAVRQGR) constitute a propeptide that is removed on maturation. Intrachain disulfides connect C42–C56, C49–C61, C55–C66, and C60–C73.

As to expression, expressed by the venom duct.

The protein localises to the secreted. Functionally, antimicrobial peptide that potently inhibits growth of Mycobacterium tuberculosis (H37Rv strain) (MIC=3 uM). This Conasprella ximenes (Interrupted cone) protein is Conopeptide X11.1.